Consider the following 328-residue polypeptide: Gonadotropin-releasing hormone receptor (328 aa).

Topologically, residues 1-38 (MANGDSPDQNENHCSAINSSILLTPGSLPTLTLSGKIR) are extracellular. Asn-18 carries an N-linked (GlcNAc...) asparagine glycan. The chain crosses the membrane as a helical span at residues 39 to 58 (VTVTFFLFLLSTIFNTSFLL). Over 59-77 (KLQNWTQRKEKRKKLSKMK) the chain is Cytoplasmic. Residues 78–97 (VLLKHLTLANLLETLIVMPL) traverse the membrane as a helical segment. The Extracellular portion of the chain corresponds to 98–115 (DGMWNITVQWYAGELLCK). Asn-102 is a glycosylation site (N-linked (GlcNAc...) asparagine). The cysteines at positions 114 and 196 are disulfide-linked. Residues 116-137 (VLSYLKLFSMYAPAFMMVVISL) traverse the membrane as a helical segment. Topologically, residues 138-164 (DRSLAITRPLAVKSNSKLGQFMIGLAW) are cytoplasmic. Residues 165–184 (LLSSIFAGPQLYIFGMIHLA) traverse the membrane as a helical segment. Over 185-212 (DDSGQTEGFSQCVTHCSFPQWWHQAFYN) the chain is Extracellular. A helical membrane pass occupies residues 213-232 (FFTFSCLFIIPLLIMLICNA). Topologically, residues 233–281 (KIIFTLTRVLHQDPHKLQLNQSKNNIPQARLRTLKMTVAFATSFTVCWT) are cytoplasmic. A helical membrane pass occupies residues 282 to 300 (PYYVLGIWYWFDPDMVNRV). Over 301–306 (SDPVNH) the chain is Extracellular. Residues 307–326 (FFFLFAFLNPCFDPLIYGYF) form a helical membrane-spanning segment. Over 327-328 (SL) the chain is Cytoplasmic.

Belongs to the G-protein coupled receptor 1 family.

The protein resides in the cell membrane. Functionally, receptor for gonadotropin releasing hormone (GnRH) that mediates the action of GnRH to stimulate the secretion of the gonadotropic hormones luteinizing hormone (LH) and follicle-stimulating hormone (FSH). This receptor mediates its action by association with G-proteins that activate a phosphatidylinositol-calcium second messenger system. The sequence is that of Gonadotropin-releasing hormone receptor (GNRHR) from Ovis aries (Sheep).